Reading from the N-terminus, the 1367-residue chain is MPSLINFDAISSLKSSLHGLSICAFNHLHHVPQHNGSLAHEGPTNQTDYSSRHHESQFSQEAHAEQRSRDDEEANSFEGSCNNSDQSWTSRVTSKKNEAGTESGDASVRRIYVTSIPEEHRHLPSQWFPSNKIRTTKYTPVSFIPKNLWNQFKNIANAFFLFVTLLQCIPLFCPEHLGLSFIPLSVILLTTAIKDGIEDYRRCVLDKKFNNTLTWKLVGFNNANALGEHIGLWRKLKKFISHTVADMSYCLKNSGISSGLATLTVDNISHRHSLESDSAFTLSSVSQDSLEIHEIGNSGPSNSFSVIQEQSTGSSNAKFERVCRKSLLVGDIVKVLADEAIPADLLILSTENSNGVCYVETKNLDGETNLKDKYALCSTKCCKSEYRCSAASFWVECEQPHADLYSLNGVVKAPGAVQSPSESTNGRKIHEEPFSISNVLLCGCTLRNSKWVIGLVLYTGSETRIQKNRGLTPSKRSRITRDLNWTIILNFLLLFAMCLFSGVLRSIYSAQNNSARVFELSKNSNTAPAHGIISIFTSLILFQNLVPISLYITMDIVRSIQSYFIFSDREMYDEKLDCPCSPKSWNISDDLGQIEYIFSDKTGTLTQNIMSFKKCSINGIRYGKSHNEDTCIKKRRNLNYNENLSCKVDLDKKKMLETLSLSDSPNPESITFISSKFVDHLQSNENYIQTEACFEFFKALALCHSVVTDVQDETLIYNAQSPDEEALVKVARDFGFTLLNTKNRRYTIRIRGENKNFRVLDIIPFTSTRKRMSVIIRDEDGIIHLICKGADTVIFPRLSSGQNNIIEKTKKHLASFSSEGFRTLCIARRTIDKQDYLEWKVNFNEANSAIHERNEKVSKVSEMIEQELELLGGTAIEDKLQENVPETIALLAIAGIKLWVLTGDKVETAINIGYSCNLLDPNMTIFRIDANSFGALEEVEAFIRNTLCFNFGYMGTDEEFRFLLKDHSPPSPKHAIVIDGDALNFVLSEQVSFLFLMLCKQCKTVLCCRVSPSQKAAVVALVKKSLNVVTLAIGDGANDVSMIQEADVGVGIKGVEGQAASMSADYAIGQFSFLGRLLLVHGRWDYKRMSQMISFFFYKNVIWTFILFWYQFYNEFDGNYIFDYTYVMLFNLLFTSLPVIIAGCFDQDVDASVSMKNPSLYQRGILGLEWNGKRFWSYMLDGIYQSLVCFGVALFVFKFGDFVSWTGRNIECIEDIGLFISSPTIFVINIFILMNQERLNLISLITWMFSIGVFWIWTFIYSEVGPSYAFHKSASRTCQTFGFWCVTVLTIALCLLPRFSYICLQKLFYPRDIDLLRRRLCAKSDDETSSSSSFATDIEMCEQCNDPLSSKKNSGIVTSVSFDDSNK.

Residues M1–N154 lie on the Cytoplasmic side of the membrane. Positions H34 to G104 are disordered. Residues S50–D70 show a composition bias toward basic and acidic residues. Positions F77–V92 are enriched in polar residues. The chain crosses the membrane as a helical span at residues I155–F172. Over C173–L177 the chain is Lumenal. A helical transmembrane segment spans residues G178–I197. The Cytoplasmic segment spans residues E198–D482. A helical membrane pass occupies residues L483–V503. The Lumenal portion of the chain corresponds to L504–G531. The helical transmembrane segment at I532 to I552 threads the bilayer. The Cytoplasmic segment spans residues T553–Q1091. The 4-aspartylphosphate intermediate role is filled by D600. 15 residues coordinate ATP: D600, K601, T602, E724, F765, S767, K770, K788, R822, T823, T902, G903, D904, R1009, and K1015. D600 serves as a coordination point for Mg(2+). T602 provides a ligand contact to Mg(2+). D1035 is a Mg(2+) binding site. ATP contacts are provided by N1038 and D1039. Position 1039 (D1039) interacts with Mg(2+). Residues M1092–F1112 form a helical membrane-spanning segment. Residues Y1113–Y1124 are Lumenal-facing. A helical membrane pass occupies residues T1125–F1145. The Cytoplasmic segment spans residues D1146–R1174. A helical transmembrane segment spans residues F1175–F1197. The Lumenal segment spans residues K1198–C1212. The chain crosses the membrane as a helical span at residues I1213–L1233. Residues M1234–N1240 lie on the Cytoplasmic side of the membrane. Residues L1241–Y1261 traverse the membrane as a helical segment. The Lumenal portion of the chain corresponds to S1262–R1276. A helical membrane pass occupies residues T1277–P1297. R1298 is an a 1,2-diacyl-sn-glycero-3-phospho-L-serine binding site. At R1298 to K1367 the chain is on the cytoplasmic side.

Belongs to the cation transport ATPase (P-type) (TC 3.A.3) family. Type IV subfamily. Requires Mg(2+) as cofactor.

It localises to the cell membrane. Its subcellular location is the endoplasmic reticulum membrane. It catalyses the reaction ATP + H2O + phospholipidSide 1 = ADP + phosphate + phospholipidSide 2.. The enzyme catalyses a 1,2-diacyl-sn-glycero-3-phosphoethanolamine(out) + ATP + H2O = a 1,2-diacyl-sn-glycero-3-phosphoethanolamine(in) + ADP + phosphate + H(+). The catalysed reaction is a 1,2-diacyl-sn-glycero-3-phosphocholine(out) + ATP + H2O = a 1,2-diacyl-sn-glycero-3-phosphocholine(in) + ADP + phosphate + H(+). It carries out the reaction a beta-D-glucosyl-(1&lt;-&gt;1')-N-acylsphing-4-enine(out) + ATP + H2O = a beta-D-glucosyl-(1&lt;-&gt;1')-N-acylsphing-4-enine(in) + ADP + phosphate + H(+). It catalyses the reaction a 1,2-diacyl-sn-glycero-3-phospho-L-serine(out) + ATP + H2O = a 1,2-diacyl-sn-glycero-3-phospho-L-serine(in) + ADP + phosphate + H(+). In terms of biological role, catalytic component of a P4-ATPase flippase complex which catalyzes the hydrolysis of ATP coupled to the transport of glucosylceramide, phosphatidylcholine, phosphatidylethanolamine, and small amounts of phosphatidylserine from the lumenal to the cytosolic leaflet of the cell membrane and ensures the maintenance of asymmetric distribution of phospholipids. This chain is Phospholipid-transporting ATPase C4F10.16c, found in Schizosaccharomyces pombe (strain 972 / ATCC 24843) (Fission yeast).